Here is a 131-residue protein sequence, read N- to C-terminus: Snaclec A8 (131 aa).

Disulfide bonds link cysteine 2–cysteine 13, cysteine 30–cysteine 129, and cysteine 104–cysteine 121. Residues 9–130 enclose the C-type lectin domain; the sequence is HEGHCYKVFN…CGQPYRFTCE (122 aa).

This sequence belongs to the snaclec family. Heterodimer; disulfide-linked. In terms of tissue distribution, expressed by the venom gland.

The protein localises to the secreted. Functionally, interferes with one step of hemostasis (modulation of platelet aggregation, or coagulation cascade, for example). This Macrovipera lebetinus (Levantine viper) protein is Snaclec A8.